The chain runs to 1454 residues: Mediator of RNA polymerase II transcription subunit 14 (1454 aa).

The segment at 1–34 (MAPVQLENHQLVPPGGGGGGSGGPPSAPAPPPPG) is disordered. A compositionally biased stretch (gly residues) spans 14-23 (PGGGGGGSGG). Residues 25-34 (PSAPAPPPPG) are compositionally biased toward pro residues. An LXXLL motif 1 motif is present at residues 69 to 73 (LTDLL). The interval 188 to 566 (KQATLHQLNQ…VPNKPTQLSY (379 aa)) is interaction with STAT2. Residues 500–824 (LGQQRCKQSI…TKGSSISIQW (325 aa)) are interaction with SREBF1. Phosphoserine occurs at positions 617 and 986. Residues 973–1167 (ARRRSVNEDD…MPPPRKLPQR (195 aa)) are disordered. Residues 1001-1011 (QPPPQQQPFPK) are compositionally biased toward pro residues. 2 stretches are compositionally biased toward polar residues: residues 1024–1054 (PPTS…SSPS) and 1092–1101 (DPSSPYTMVS). Phosphoserine is present on residues Ser-1112, Ser-1119, Ser-1128, Ser-1136, and Ser-1144. Positions 1147–1156 (AGTSSQTMPT) are enriched in polar residues. An LXXLL motif 2 motif is present at residues 1182–1186 (LNILL).

Belongs to the Mediator complex subunit 14 family. As to quaternary structure, interacts with GATA1. Component of the Mediator complex, which is composed of MED1, MED4, MED6, MED7, MED8, MED9, MED10, MED11, MED12, MED13, MED13L, MED14, MED15, MED16, MED17, MED18, MED19, MED20, MED21, MED22, MED23, MED24, MED25, MED26, MED27, MED29, MED30, MED31, CCNC, CDK8 and CDC2L6/CDK11. The MED12, MED13, CCNC and CDK8 subunits form a distinct module termed the CDK8 module. Mediator containing the CDK8 module is less active than Mediator lacking this module in supporting transcriptional activation. Individual preparations of the Mediator complex lacking one or more distinct subunits have been variously termed ARC, CRSP, DRIP, PC2, SMCC and TRAP. Interacts with AR, ESR1, SREBF1 and STAT2. As to expression, ubiquitous.

The protein localises to the nucleus. Functionally, component of the Mediator complex, a coactivator involved in the regulated transcription of nearly all RNA polymerase II-dependent genes. Mediator functions as a bridge to convey information from gene-specific regulatory proteins to the basal RNA polymerase II transcription machinery. Mediator is recruited to promoters by direct interactions with regulatory proteins and serves as a scaffold for the assembly of a functional preinitiation complex with RNA polymerase II and the general transcription factors. The protein is Mediator of RNA polymerase II transcription subunit 14 (MED14) of Homo sapiens (Human).